The following is a 668-amino-acid chain: DNA-directed RNA polymerase subunit beta' (668 aa).

Positions 71, 73, 91, and 94 each coordinate Zn(2+). Mg(2+)-binding residues include Asp505, Asp507, and Asp509.

It belongs to the RNA polymerase beta' chain family. RpoC1 subfamily. In terms of assembly, in plastids the minimal PEP RNA polymerase catalytic core is composed of four subunits: alpha, beta, beta', and beta''. When a (nuclear-encoded) sigma factor is associated with the core the holoenzyme is formed, which can initiate transcription. The cofactor is Mg(2+). Requires Zn(2+) as cofactor.

Its subcellular location is the plastid. The protein localises to the chloroplast. The enzyme catalyses RNA(n) + a ribonucleoside 5'-triphosphate = RNA(n+1) + diphosphate. Its function is as follows. DNA-dependent RNA polymerase catalyzes the transcription of DNA into RNA using the four ribonucleoside triphosphates as substrates. The sequence is that of DNA-directed RNA polymerase subunit beta' from Mesostigma viride (Green alga).